The chain runs to 448 residues: N-succinylarginine dihydrolase (448 aa).

Residues 19-28 (GGLSYGNVAS), N110, and 137-138 (HR) each bind substrate. E174 is an active-site residue. R214 contacts substrate. Residue H250 is part of the active site. D252 and N365 together coordinate substrate. The active-site Nucleophile is C371.

The protein belongs to the succinylarginine dihydrolase family. In terms of assembly, homodimer.

The catalysed reaction is N(2)-succinyl-L-arginine + 2 H2O + 2 H(+) = N(2)-succinyl-L-ornithine + 2 NH4(+) + CO2. It participates in amino-acid degradation; L-arginine degradation via AST pathway; L-glutamate and succinate from L-arginine: step 2/5. In terms of biological role, catalyzes the hydrolysis of N(2)-succinylarginine into N(2)-succinylornithine, ammonia and CO(2). This Pseudomonas savastanoi pv. phaseolicola (strain 1448A / Race 6) (Pseudomonas syringae pv. phaseolicola (strain 1448A / Race 6)) protein is N-succinylarginine dihydrolase.